The primary structure comprises 186 residues: Ribosome-recycling factor (186 aa).

The protein belongs to the RRF family.

Its subcellular location is the cytoplasm. Its function is as follows. Responsible for the release of ribosomes from messenger RNA at the termination of protein biosynthesis. May increase the efficiency of translation by recycling ribosomes from one round of translation to another. This is Ribosome-recycling factor from Rickettsia rickettsii (strain Iowa).